Consider the following 259-residue polypeptide: Probable ABC transporter permease protein RP096 (259 aa).

Helical transmembrane passes span 13–35, 49–69, 148–168, 195–215, and 237–257; these read TIKF…SSII, LFIG…SGAV, VIAA…IGVM, PIDV…ISII, and AVVN…ELFF.

This sequence belongs to the MlaE permease family.

It is found in the cell inner membrane. Functionally, could be part of an ABC transporter complex. The sequence is that of Probable ABC transporter permease protein RP096 from Rickettsia prowazekii (strain Madrid E).